The sequence spans 250 residues: Putative apoptosis inhibitor ORF99 (250 aa).

One copy of the BIR repeat lies at 13–78 (RVNSFGGWSK…KFSGDCLYLK (66 aa)).

Its function is as follows. May act as an apoptosis inhibitor. This Ostreid herpesvirus 1 (isolate France) (OsHV-1) protein is Putative apoptosis inhibitor ORF99.